We begin with the raw amino-acid sequence, 380 residues long: Putative S-(hydroxymethyl)glutathione dehydrogenase 2 (380 aa).

Residue cysteine 50 participates in Zn(2+) binding. Histidine 51 is an NAD(+) binding site. Zn(2+) contacts are provided by histidine 72, glutamate 73, cysteine 102, cysteine 105, cysteine 108, cysteine 116, and cysteine 179. NAD(+) contacts are provided by residues 204 to 209, aspartate 228, and 297 to 299; these read GLGSVG and IGV.

It belongs to the zinc-containing alcohol dehydrogenase family. Class-III subfamily. Zn(2+) serves as cofactor.

It carries out the reaction a primary alcohol + NAD(+) = an aldehyde + NADH + H(+). The enzyme catalyses a secondary alcohol + NAD(+) = a ketone + NADH + H(+). It catalyses the reaction S-(hydroxymethyl)glutathione + NADP(+) = S-formylglutathione + NADPH + H(+). The catalysed reaction is S-(hydroxymethyl)glutathione + NAD(+) = S-formylglutathione + NADH + H(+). It carries out the reaction S-nitrosoglutathione + NADH + H(+) = S-(hydroxysulfenamide)glutathione + NAD(+). Oxidizes long-chain alcohols and, in the presence of glutathione, is able to oxidize formaldehyde. Also acts as a S-nitroso-glutathione reductase by catalyzing the NADH-dependent reduction of S-nitrosoglutathione, thereby regulating protein S-nitrosylation. This is Putative S-(hydroxymethyl)glutathione dehydrogenase 2 from Schizosaccharomyces pombe (strain 972 / ATCC 24843) (Fission yeast).